The chain runs to 271 residues: MFSIQQPLLVFSDLDGTLLDSHSYDWQPAAPWLSRLREANVPVILCSSKTSAEMLYLQKTLGLQGVPLIAENGAVIQLAEQWQDIDGFPRIISGISHGEISQVLNTLREKEHFKFTTFDDVDDATIAEWTGLSRSQAALTQLHEASVTLIWRDSDERMAQFTARLNELGLQFMQGARFWHVLDASAGKDQAANWIIATYQQLSGKRPTTLGLGDGPNDAPLLEVMDYAVIVKGLNREGVHLHDEDPARVWRTQREGPEGWREGLDHFFSAR.

The active-site Nucleophile is the aspartate 13. Positions 13, 15, and 214 each coordinate Mg(2+).

It belongs to the HAD-like hydrolase superfamily. MPGP family. Requires Mg(2+) as cofactor.

It is found in the cytoplasm. It catalyses the reaction 2-O-(alpha-D-mannosyl)-3-phosphoglycerate + H2O = (2R)-2-O-(alpha-D-mannosyl)-glycerate + phosphate. The polypeptide is Mannosyl-3-phosphoglycerate phosphatase (yedP) (Shigella boydii serotype 4 (strain Sb227)).